We begin with the raw amino-acid sequence, 174 residues long: Gamma-crystallin D (174 aa).

2 Beta/gamma crystallin 'Greek key' domains span residues Gly-2 to Ser-40 and Gly-41 to Pro-83. The connecting peptide stretch occupies residues His-84–Ser-87. 2 consecutive Beta/gamma crystallin 'Greek key' domains span residues His-88–Glu-128 and Gly-129–Met-171.

Belongs to the beta/gamma-crystallin family. As to expression, detected in the superior olivary complex of the auditory hindbrain.

Its function is as follows. Crystallins are the dominant structural components of the vertebrate eye lens. The protein is Gamma-crystallin D (Crygd) of Mus musculus (Mouse).